The sequence spans 428 residues: MAKEKPILNVAFIGHVDAGKSTTVGRLLLDGGAIDPQLIVRLKKEAEEKGKAGFEFAYVMDGLKEERERGVTIDVAHKKFPTAKYEVTIVDCPGHRDFIKNMITGASQADAAILVVNVDDAKSGIQPQTREHVFLSRTLGISQLAVAINKMDTVNFSEADYNEMKKMLGDQLLKMVGFNPDNITFVPVASLHGDNVFKKSDKTPWYNGPTLAEVIDAFQPPEKPTTLPLRLPIQDVYSITGVGTVPVGRVETGIIKPGDKVIFEPAGAVGEIKTVEMHHEQLPSAEPGDNIGFNVRGVGKKDIKRGDVLGHTTNPPTVAADFTAQIVVLQHPSVMTVGYTPVFHAHTAQIACTFMELQKKLNPATGEVLEENPDFLKAGDAAIVKLMPTKPLVMESVKEIPQLGRFAIRDMGMTVAAGMAIQVTAKNK.

Residues 5-225 form the tr-type G domain; that stretch reads KPILNVAFIG…DAFQPPEKPT (221 aa). A G1 region spans residues 14 to 21; sequence GHVDAGKS. 14–21 lines the GTP pocket; that stretch reads GHVDAGKS. Mg(2+) is bound at residue S21. A G2 region spans residues 70–74; the sequence is GVTID. Residues 91–94 are G3; the sequence is DCPG. Residues 91 to 95 and 149 to 152 each bind GTP; these read DCPGH and NKMD. The segment at 149 to 152 is G4; it reads NKMD. The interval 189–191 is G5; that stretch reads ASL.

It belongs to the TRAFAC class translation factor GTPase superfamily. Classic translation factor GTPase family. EF-Tu/EF-1A subfamily.

The protein resides in the cytoplasm. The catalysed reaction is GTP + H2O = GDP + phosphate + H(+). In terms of biological role, GTP hydrolase that promotes the GTP-dependent binding of aminoacyl-tRNA to the A-site of ribosomes during protein biosynthesis. The polypeptide is Elongation factor 1-alpha (Methanococcus maripaludis (strain C5 / ATCC BAA-1333)).